Here is a 336-residue protein sequence, read N- to C-terminus: HTH-type transcriptional regulator RafR (336 aa).

One can recognise an HTH lacI-type domain in the interval 2–55 (SLKAIATTLGISVTTVSRALGGFSDVAASTRERVEAEARRRGYRPNTQARRLKT). Residues 3 to 22 (LKAIATTLGISVTTVSRALG) constitute a DNA-binding region (H-T-H motif).

Homodimer.

Its function is as follows. Repressor that negatively controls the expression of the raffinose (raf) operon by binding to the raf operator (rafO) DNA. Acts by binding to two operator sites, O1 and 02, which flank the -35 raf promoter box. RafR bound to 02 alone results in 45 % repression of transcription, whereas RafR bound to O1 leads to only 6% repression. This is HTH-type transcriptional regulator RafR from Escherichia coli.